The following is a 104-amino-acid chain: Gastrin (104 aa).

The signal sequence occupies residues 1 to 21 (MQRLCAYVLIHVLALAACSEA). Positions 22–58 (SWKPGFQLQDASSGPGANRGKEPHELDRLGPASHHRR) are excised as a propeptide. A disordered region spans residues 27–67 (FQLQDASSGPGANRGKEPHELDRLGPASHHRRQLGLQGPPH). Over residues 40–49 (RGKEPHELDR) the composition is skewed to basic and acidic residues. Position 59 is a pyrrolidone carboxylic acid; in form big gastrin (glutamine 59). At glutamine 76 the chain carries Pyrrolidone carboxylic acid; in form gastrin. Tyrosine 87 bears the Sulfotyrosine; partial mark. Phenylalanine 92 carries the post-translational modification Phenylalanine amide. A Phosphoserine modification is found at serine 96. Positions 96–104 (SAEEGDQRP) are excised as a propeptide.

The protein belongs to the gastrin/cholecystokinin family. Sulfation enhances proteolytic processing, and blocks peptide degradation. Levels of sulfation differ between proteolytically-cleaved gastrins. Thus, gastrin-6 is almost 73% sulfated, whereas the larger gastrins are less than 50% sulfated. Sulfation levels are also tissue-specific.

The protein localises to the secreted. Gastrin stimulates the stomach mucosa to produce and secrete hydrochloric acid and the pancreas to secrete its digestive enzymes. It also stimulates smooth muscle contraction and increases blood circulation and water secretion in the stomach and intestine. The protein is Gastrin (GAST) of Sus scrofa (Pig).